The primary structure comprises 262 residues: MTFLAILFVIAVLLLLAQLPVIGFYIRAVYFGMCLIIGGFLGGLASIPFGKSPNNHFRMFKIFQAMTWPMGVRFELRNSEILHDKKPYIIIANHQSALDVLGMSFAWPVDCVVMLKSSLKYLPGFNLCAYLCDSVYINRFSKEKALKTVDTTLHEIVTKKRKVWIYPEGTRNAEPELLPFKKGAFILAKQAKIPIVPCVFSSHKFFYSHAEKRLTSGNCIIDILPEVDSSKFDSIDDLSAHCRKIMQAHREKLDAEAANLNI.

3 consecutive transmembrane segments (helical) span residues 3–23 (FLAI…PVIG), 29–49 (VYFG…SIPF), and 89–109 (IIIA…AWPV). The HXXXXD motif motif lies at 94–99 (HQSALD).

This sequence belongs to the 1-acyl-sn-glycerol-3-phosphate acyltransferase family.

It localises to the membrane. It catalyses the reaction a 1-acyl-sn-glycero-3-phosphate + an acyl-CoA = a 1,2-diacyl-sn-glycero-3-phosphate + CoA. The protein operates within phospholipid metabolism; CDP-diacylglycerol biosynthesis; CDP-diacylglycerol from sn-glycerol 3-phosphate: step 2/3. In terms of biological role, converts lysophosphatidic acid (LPA) into phosphatidic acid by incorporating an acyl moiety at the sn-2 position of the glycerol backbone. This is Putative 1-acyl-sn-glycerol-3-phosphate acyltransferase acl-1 (acl-1) from Caenorhabditis elegans.